Here is a 244-residue protein sequence, read N- to C-terminus: tRNA (guanine-N(1)-)-methyltransferase (244 aa).

S-adenosyl-L-methionine is bound by residues G110 and 129–134 (IGDYIL).

It belongs to the RNA methyltransferase TrmD family. In terms of assembly, homodimer.

It localises to the cytoplasm. The catalysed reaction is guanosine(37) in tRNA + S-adenosyl-L-methionine = N(1)-methylguanosine(37) in tRNA + S-adenosyl-L-homocysteine + H(+). In terms of biological role, specifically methylates guanosine-37 in various tRNAs. In Syntrophomonas wolfei subsp. wolfei (strain DSM 2245B / Goettingen), this protein is tRNA (guanine-N(1)-)-methyltransferase.